The primary structure comprises 240 residues: Large ribosomal subunit protein bL25 (240 aa).

2 disordered regions span residues 1–21 and 204–240; these read MAEN…PARR and GAAP…KAKK. Residues 204–229 are compositionally biased toward low complexity; the sequence is GAAPAAGAAAPAGGAAPAAGAAPAKG. Over residues 230–240 the composition is skewed to basic and acidic residues; sequence GEAKGGDKAKK.

It belongs to the bacterial ribosomal protein bL25 family. CTC subfamily. In terms of assembly, part of the 50S ribosomal subunit; part of the 5S rRNA/L5/L18/L25 subcomplex. Contacts the 5S rRNA. Binds to the 5S rRNA independently of L5 and L18.

Functionally, this is one of the proteins that binds to the 5S RNA in the ribosome where it forms part of the central protuberance. The polypeptide is Large ribosomal subunit protein bL25 (Anaeromyxobacter dehalogenans (strain 2CP-1 / ATCC BAA-258)).